Reading from the N-terminus, the 447-residue chain is Tubulin beta-1 chain (447 aa).

GTP is bound by residues Gln11, Glu69, Ser138, Gly142, Thr143, Gly144, Asn204, and Asn226. A Mg(2+)-binding site is contributed by Glu69. Residues 411–427 show a composition bias toward polar residues; the sequence is AESNMNDLVSEYQQYQD. The tract at residues 411 to 447 is disordered; sequence AESNMNDLVSEYQQYQDATADEEGDYEDEEEQVPEDE. A compositionally biased stretch (acidic residues) spans 429-447; that stretch reads TADEEGDYEDEEEQVPEDE.

The protein belongs to the tubulin family. In terms of assembly, dimer of alpha and beta chains. A typical microtubule is a hollow water-filled tube with an outer diameter of 25 nm and an inner diameter of 15 nM. Alpha-beta heterodimers associate head-to-tail to form protofilaments running lengthwise along the microtubule wall with the beta-tubulin subunit facing the microtubule plus end conferring a structural polarity. Microtubules usually have 13 protofilaments but different protofilament numbers can be found in some organisms and specialized cells. Mg(2+) is required as a cofactor. Expressed in leaf sheaths.

The protein localises to the cytoplasm. Its subcellular location is the cytoskeleton. Its function is as follows. Tubulin is the major constituent of microtubules, a cylinder consisting of laterally associated linear protofilaments composed of alpha- and beta-tubulin heterodimers. Microtubules grow by the addition of GTP-tubulin dimers to the microtubule end, where a stabilizing cap forms. Below the cap, tubulin dimers are in GDP-bound state, owing to GTPase activity of alpha-tubulin. The polypeptide is Tubulin beta-1 chain (TUBB1) (Oryza sativa subsp. japonica (Rice)).